A 226-amino-acid polypeptide reads, in one-letter code: Ribonuclease 3 (226 aa).

An RNase III domain is found at 7-129 (LPRLCRTLGY…IIGAIYLDSD (123 aa)). Glutamate 42 lines the Mg(2+) pocket. The active site involves aspartate 46. Residues aspartate 115 and glutamate 118 each contribute to the Mg(2+) site. The active site involves glutamate 118. In terms of domain architecture, DRBM spans 156-226 (DAKTLLQEYL…AAQVLELLKK (71 aa)).

Belongs to the ribonuclease III family. Homodimer. Mg(2+) is required as a cofactor.

The protein localises to the cytoplasm. The enzyme catalyses Endonucleolytic cleavage to 5'-phosphomonoester.. Its function is as follows. Digests double-stranded RNA. Involved in the processing of primary rRNA transcript to yield the immediate precursors to the large and small rRNAs (23S and 16S). Processes some mRNAs, and tRNAs when they are encoded in the rRNA operon. Processes pre-crRNA and tracrRNA of type II CRISPR loci if present in the organism. The chain is Ribonuclease 3 from Shewanella sp. (strain MR-7).